A 515-amino-acid chain; its full sequence is 2-isopropylmalate synthase (515 aa).

One can recognise a Pyruvate carboxyltransferase domain in the interval 5–267 (VIIFDTTLRD…HTNLKHDEIH (263 aa)). Residues Asp14, His202, His204, and Asn238 each contribute to the Mn(2+) site. Residues 392-515 (KLNYLSVQSG…EIKQKKVETV (124 aa)) are regulatory domain.

It belongs to the alpha-IPM synthase/homocitrate synthase family. LeuA type 1 subfamily. Homodimer. It depends on Mn(2+) as a cofactor.

It localises to the cytoplasm. It carries out the reaction 3-methyl-2-oxobutanoate + acetyl-CoA + H2O = (2S)-2-isopropylmalate + CoA + H(+). The protein operates within amino-acid biosynthesis; L-leucine biosynthesis; L-leucine from 3-methyl-2-oxobutanoate: step 1/4. Catalyzes the condensation of the acetyl group of acetyl-CoA with 3-methyl-2-oxobutanoate (2-ketoisovalerate) to form 3-carboxy-3-hydroxy-4-methylpentanoate (2-isopropylmalate). The polypeptide is 2-isopropylmalate synthase (Aliivibrio fischeri (strain MJ11) (Vibrio fischeri)).